Reading from the N-terminus, the 356-residue chain is CMP-sialic acid transporter 2 (356 aa).

Residues 1–24 show a composition bias toward basic and acidic residues; that stretch reads MEYRRVKDQESYDVVSQKDIESPG. The tract at residues 1 to 43 is disordered; the sequence is MEYRRVKDQESYDVVSQKDIESPGERSLSSTSATSSLSTAGAS. The Cytoplasmic segment spans residues 1 to 52; that stretch reads MEYRRVKDQESYDVVSQKDIESPGERSLSSTSATSSLSTAGASKGNNSWKLK. The span at 27–43 shows a compositional bias: low complexity; that stretch reads SLSSTSATSSLSTAGAS. A helical transmembrane segment spans residues 53 to 73; it reads SIVTLALTLLTSSQAILIVWS. Residues 74–82 are Lumenal-facing; the sequence is KRAGKYEYS. A helical membrane pass occupies residues 83-103; it reads VTTANFSVEALKCLLSLIALY. The Cytoplasmic portion of the chain corresponds to 104–125; that stretch reads RTWNSQGVTEDNRLSTSFDEVS. The helical transmembrane segment at 126-146 threads the bilayer; sequence VYPIPAILYMVKNLLQYYIFA. Topologically, residues 147-149 are lumenal; that stretch reads YVD. The helical transmembrane segment at 150-172 threads the bilayer; that stretch reads APAYQILKNLNIISTGVLYRIIL. The Cytoplasmic portion of the chain corresponds to 173 to 175; sequence KKK. Residues 176–196 traverse the membrane as a helical segment; the sequence is LSEIQWAAFILLCAGCTTAQL. Residues 197–211 lie on the Lumenal side of the membrane; it reads NPSSDHVLQTPIQGW. The helical transmembrane segment at 212–232 threads the bilayer; that stretch reads VMAIVMALLSGFAGVYTEAII. The Cytoplasmic portion of the chain corresponds to 233 to 239; the sequence is KKRPSRN. The chain crosses the membrane as a helical span at residues 240–260; that stretch reads INVQNFWLYIFGMLFNLVAIC. Topologically, residues 261 to 277 are lumenal; that stretch reads VQDFDAVMNKGFFHGYS. The chain crosses the membrane as a helical span at residues 278-298; that stretch reads FITVLMILNHALSGIAVSMVM. Topologically, residues 299–314 are cytoplasmic; that stretch reads KYADNIVKVYSTSVAM. The helical transmembrane segment at 315–335 threads the bilayer; sequence LLTAVVSVFLFGFHLSLAFFL. Residues 336-356 are Lumenal-facing; the sequence is GSTVVSVSVYLHSVGKPQPQK.

The protein belongs to the nucleotide-sugar transporter family. CMP-Sialate:CMP antiporter (TC 2.A.7.12) subfamily.

It localises to the golgi apparatus membrane. Its function is as follows. Sugar transporter involved in the transport of CMP-sialic acid from the cytoplasm into the Golgi. May transport important nucleotide sugars such as CMP-Kdo (2-keto-3-deoxy-D-manno-octulosonic acid) in physiological conditions. The sequence is that of CMP-sialic acid transporter 2 from Oryza sativa subsp. indica (Rice).